We begin with the raw amino-acid sequence, 218 residues long: Ribosomal RNA large subunit methyltransferase E (218 aa).

Positions 64, 66, 92, 108, and 133 each coordinate S-adenosyl-L-methionine. The Proton acceptor role is filled by Lys-173.

It belongs to the class I-like SAM-binding methyltransferase superfamily. RNA methyltransferase RlmE family.

It is found in the cytoplasm. The catalysed reaction is uridine(2552) in 23S rRNA + S-adenosyl-L-methionine = 2'-O-methyluridine(2552) in 23S rRNA + S-adenosyl-L-homocysteine + H(+). Its function is as follows. Specifically methylates the uridine in position 2552 of 23S rRNA at the 2'-O position of the ribose in the fully assembled 50S ribosomal subunit. This chain is Ribosomal RNA large subunit methyltransferase E, found in Paracidovorax citrulli (strain AAC00-1) (Acidovorax citrulli).